Here is a 106-residue protein sequence, read N- to C-terminus: Nucleoid-associated protein Smal_0858 (106 aa).

The interval 81-106 (IDAESKSKMGSATAGMQLPPGMKLPF) is disordered.

It belongs to the YbaB/EbfC family. Homodimer.

The protein resides in the cytoplasm. It localises to the nucleoid. Binds to DNA and alters its conformation. May be involved in regulation of gene expression, nucleoid organization and DNA protection. In Stenotrophomonas maltophilia (strain R551-3), this protein is Nucleoid-associated protein Smal_0858.